Consider the following 427-residue polypeptide: Histidinol dehydrogenase (427 aa).

Positions 123, 185, and 208 each coordinate NAD(+). 3 residues coordinate substrate: Ser-231, Gln-253, and His-256. Gln-253 and His-256 together coordinate Zn(2+). Catalysis depends on proton acceptor residues Glu-321 and His-322. Substrate-binding residues include His-322, Asp-355, Glu-409, and His-414. Asp-355 is a Zn(2+) binding site. His-414 provides a ligand contact to Zn(2+).

The protein belongs to the histidinol dehydrogenase family. Zn(2+) is required as a cofactor.

It catalyses the reaction L-histidinol + 2 NAD(+) + H2O = L-histidine + 2 NADH + 3 H(+). Its pathway is amino-acid biosynthesis; L-histidine biosynthesis; L-histidine from 5-phospho-alpha-D-ribose 1-diphosphate: step 9/9. Catalyzes the sequential NAD-dependent oxidations of L-histidinol to L-histidinaldehyde and then to L-histidine. The polypeptide is Histidinol dehydrogenase (hisD) (Bacillus subtilis (strain 168)).